A 237-amino-acid chain; its full sequence is Carboxy-S-adenosyl-L-methionine synthase (237 aa).

S-adenosyl-L-methionine contacts are provided by residues tyrosine 36, glycine 61–serine 63, aspartate 86–asparagine 87, aspartate 112–isoleucine 113, asparagine 127, and arginine 194.

Belongs to the class I-like SAM-binding methyltransferase superfamily. Cx-SAM synthase family. In terms of assembly, homodimer.

The enzyme catalyses prephenate + S-adenosyl-L-methionine = carboxy-S-adenosyl-L-methionine + 3-phenylpyruvate + H2O. Catalyzes the conversion of S-adenosyl-L-methionine (SAM) to carboxy-S-adenosyl-L-methionine (Cx-SAM). In Ruthia magnifica subsp. Calyptogena magnifica, this protein is Carboxy-S-adenosyl-L-methionine synthase.